Here is a 466-residue protein sequence, read N- to C-terminus: Histidine--tRNA ligase (466 aa).

It belongs to the class-II aminoacyl-tRNA synthetase family. Homodimer.

It is found in the cytoplasm. The catalysed reaction is tRNA(His) + L-histidine + ATP = L-histidyl-tRNA(His) + AMP + diphosphate + H(+). This Bifidobacterium longum (strain NCC 2705) protein is Histidine--tRNA ligase (hisS).